Consider the following 238-residue polypeptide: Ribonuclease 3 (238 aa).

Residues 4–134 (PRQALLDAFG…LLGAIYLHHG (131 aa)) enclose the RNase III domain. Glu-44 contributes to the Mg(2+) binding site. Asp-48 is an active-site residue. 2 residues coordinate Mg(2+): Asp-120 and Glu-123. The active site involves Glu-123. In terms of domain architecture, DRBM spans 161 to 229 (DWKTSLQELT…ASAAWKALDV (69 aa)).

Belongs to the ribonuclease III family. Homodimer. Requires Mg(2+) as cofactor.

It is found in the cytoplasm. It carries out the reaction Endonucleolytic cleavage to 5'-phosphomonoester.. Its function is as follows. Digests double-stranded RNA. Involved in the processing of primary rRNA transcript to yield the immediate precursors to the large and small rRNAs (23S and 16S). Processes some mRNAs, and tRNAs when they are encoded in the rRNA operon. Processes pre-crRNA and tracrRNA of type II CRISPR loci if present in the organism. The chain is Ribonuclease 3 from Mycobacterium leprae (strain TN).